A 576-amino-acid polypeptide reads, in one-letter code: Formate--tetrahydrofolate ligase 1 (576 aa).

Residue Thr-69–Thr-76 participates in ATP binding.

This sequence belongs to the formate--tetrahydrofolate ligase family.

The catalysed reaction is (6S)-5,6,7,8-tetrahydrofolate + formate + ATP = (6R)-10-formyltetrahydrofolate + ADP + phosphate. It participates in one-carbon metabolism; tetrahydrofolate interconversion. The protein is Formate--tetrahydrofolate ligase 1 of Rubrobacter xylanophilus (strain DSM 9941 / JCM 11954 / NBRC 16129 / PRD-1).